Here is a 154-residue protein sequence, read N- to C-terminus: SsrA-binding protein (154 aa).

Residues 134-154 form a disordered region; it reads QREDLKRRAEDRDTQRELARF.

It belongs to the SmpB family.

The protein resides in the cytoplasm. Functionally, required for rescue of stalled ribosomes mediated by trans-translation. Binds to transfer-messenger RNA (tmRNA), required for stable association of tmRNA with ribosomes. tmRNA and SmpB together mimic tRNA shape, replacing the anticodon stem-loop with SmpB. tmRNA is encoded by the ssrA gene; the 2 termini fold to resemble tRNA(Ala) and it encodes a 'tag peptide', a short internal open reading frame. During trans-translation Ala-aminoacylated tmRNA acts like a tRNA, entering the A-site of stalled ribosomes, displacing the stalled mRNA. The ribosome then switches to translate the ORF on the tmRNA; the nascent peptide is terminated with the 'tag peptide' encoded by the tmRNA and targeted for degradation. The ribosome is freed to recommence translation, which seems to be the essential function of trans-translation. The sequence is that of SsrA-binding protein from Nitratidesulfovibrio vulgaris (strain ATCC 29579 / DSM 644 / CCUG 34227 / NCIMB 8303 / VKM B-1760 / Hildenborough) (Desulfovibrio vulgaris).